We begin with the raw amino-acid sequence, 491 residues long: Protein nucleotidyltransferase YdiU (491 aa).

The ATP site is built by Gly-94, Gly-96, Arg-97, Lys-117, Asp-129, Gly-130, Arg-180, and Arg-187. Catalysis depends on Asp-256, which acts as the Proton acceptor. Mg(2+)-binding residues include Asn-257 and Asp-266. Position 266 (Asp-266) interacts with ATP.

It belongs to the SELO family. Mg(2+) is required as a cofactor. Requires Mn(2+) as cofactor.

The catalysed reaction is L-seryl-[protein] + ATP = 3-O-(5'-adenylyl)-L-seryl-[protein] + diphosphate. It carries out the reaction L-threonyl-[protein] + ATP = 3-O-(5'-adenylyl)-L-threonyl-[protein] + diphosphate. It catalyses the reaction L-tyrosyl-[protein] + ATP = O-(5'-adenylyl)-L-tyrosyl-[protein] + diphosphate. The enzyme catalyses L-histidyl-[protein] + UTP = N(tele)-(5'-uridylyl)-L-histidyl-[protein] + diphosphate. The catalysed reaction is L-seryl-[protein] + UTP = O-(5'-uridylyl)-L-seryl-[protein] + diphosphate. It carries out the reaction L-tyrosyl-[protein] + UTP = O-(5'-uridylyl)-L-tyrosyl-[protein] + diphosphate. Nucleotidyltransferase involved in the post-translational modification of proteins. It can catalyze the addition of adenosine monophosphate (AMP) or uridine monophosphate (UMP) to a protein, resulting in modifications known as AMPylation and UMPylation. The sequence is that of Protein nucleotidyltransferase YdiU from Bacillus cytotoxicus (strain DSM 22905 / CIP 110041 / 391-98 / NVH 391-98).